Reading from the N-terminus, the 179-residue chain is MRQVPVGTRLVLALAFVLVWGSSVQGYPARRARYQWVRCKPDGIFANCIEEKGPRFDLIAEESNVGPPMTDPVLMRGFPNDFFPISDDYSGSGSGSGSGSGSGSGSGSGSGSGSGSGSGSGSGSGSGSGSGSGSGSGSLADMEWEYQPTDENNIVYFNYGPFDRMLTEQNQEQPGDFII.

The signal sequence occupies residues Met-1–Gly-26. Positions Tyr-27 to Met-75 are cleaved as a propeptide — activation peptide. The cysteines at positions 39 and 48 are disulfide-linked. The tract at residues Ser-86–Glu-145 is disordered. Residues Ser-90 and Ser-92 are each glycosylated (O-linked (Xyl...) (glycosaminoglycan) serine). Tandem repeats lie at residues Ser-90 to Gly-91, Ser-92 to Gly-93, Ser-94 to Gly-95, Ser-96 to Gly-97, Ser-98 to Gly-99, Ser-100 to Gly-101, Ser-102 to Gly-103, Ser-104 to Gly-105, Ser-106 to Gly-107, Ser-108 to Gly-109, Ser-110 to Gly-111, Ser-112 to Gly-113, Ser-114 to Gly-115, Ser-116 to Gly-117, Ser-118 to Gly-119, Ser-120 to Gly-121, Ser-122 to Gly-123, Ser-124 to Gly-125, Ser-126 to Gly-127, Ser-128 to Gly-129, Ser-130 to Gly-131, Ser-132 to Gly-133, Ser-134 to Gly-135, and Ser-136 to Gly-137. The interval Ser-90–Gly-137 is 24 X 2 AA tandem repeats of S-G. Residues Ser-92–Ser-136 are compositionally biased toward gly residues. O-linked (Xyl...) (glycosaminoglycan) serine glycans are attached at residues Ser-96, Ser-98, Ser-100, Ser-102, Ser-104, and Ser-106.

The protein belongs to the serglycin family. As to quaternary structure, binds to activated CD44 and to GZMB. Post-translationally, O-glycosylated; contains chondroitin sulfate and heparan sulfate.

It is found in the cytoplasmic granule. Its subcellular location is the cytolytic granule. It localises to the secreted. The protein resides in the extracellular space. The protein localises to the golgi apparatus. Its function is as follows. Plays a role in formation of mast cell secretory granules and mediates storage of various compounds in secretory vesicles. Required for storage of some proteases in both connective tissue and mucosal mast cells and for storage of granzyme B in T-lymphocytes. Plays a role in localizing neutrophil elastase in azurophil granules of neutrophils. Mediates processing of MMP2. Plays a role in cytotoxic cell granule-mediated apoptosis by forming a complex with granzyme B which is delivered to cells by perforin to induce apoptosis. Regulates the secretion of TNF-alpha and may also regulate protease secretion. Inhibits bone mineralization. The protein is Serglycin (Srgn) of Rattus norvegicus (Rat).